The sequence spans 288 residues: UPF0761 membrane protein HSM_1104 (288 aa).

6 helical membrane-spanning segments follow: residues 36–56 (TLAL…FPVF), 92–112 (QMSA…IHSI), 127–147 (PAIF…IVIA), 176–196 (LLSL…YMVV), 200–220 (KVSI…FTLG), and 240–260 (AMAT…AVLL).

This sequence belongs to the UPF0761 family.

The protein resides in the cell inner membrane. This is UPF0761 membrane protein HSM_1104 from Histophilus somni (strain 2336) (Haemophilus somnus).